The primary structure comprises 158 residues: Eukaryotic translation initiation factor 5A-3 (158 aa).

Positions 1–10 (MSDDEHHFES) are enriched in basic and acidic residues. A disordered region spans residues 1–23 (MSDDEHHFESSDAGASKTYPQQA). Ser2 is modified (phosphoserine). At Lys51 the chain carries Hypusine.

The protein belongs to the eIF-5A family. In terms of processing, lys-52 undergoes hypusination, a unique post-translational modification that consists in the addition of a butylamino group from spermidine to lysine side chain, leading to the formation of the unusual amino acid hypusine. eIF-5As are the only known proteins to undergo this modification, which is essential for their function. In terms of tissue distribution, expressed in the vascular tissues of roots, stems and leaves. Localized in phloem companion cells rather than sieve-tube members. Not expressed in xylem or procambium. Detected in root tips and in the chalazal tissue of fertilized ovules.

Its function is as follows. Translation factor that promotes translation elongation and termination, particularly upon ribosome stalling at specific amino acid sequence contexts. Binds between the exit (E) and peptidyl (P) site of the ribosome and promotes rescue of stalled ribosome: specifically required for efficient translation of polyproline-containing peptides as well as other motifs that stall the ribosome. Acts as a ribosome quality control (RQC) cofactor by joining the RQC complex to facilitate peptidyl transfer during CAT tailing step. Involved in supporting growth and plays a regulatory role in the response to sub-lethal osmotic and nutrient stress. The chain is Eukaryotic translation initiation factor 5A-3 (ELF5A-3) from Arabidopsis thaliana (Mouse-ear cress).